Here is a 597-residue protein sequence, read N- to C-terminus: Aspartate--tRNA(Asp/Asn) ligase (597 aa).

Residue Glu-175 coordinates L-aspartate. Positions 199–202 are aspartate; the sequence is QLFK. Position 221 (Arg-221) interacts with L-aspartate. ATP is bound by residues 221–223 and Gln-230; that span reads RDE. Residue His-453 participates in L-aspartate binding. Residue Glu-487 coordinates ATP. Arg-494 serves as a coordination point for L-aspartate. An ATP-binding site is contributed by 539–542; sequence GWDR. Residues 562 to 597 are disordered; the sequence is SGGGVDPLTDAPAPITPEQRKESGIDAKPKKKETKN. Basic and acidic residues predominate over residues 579 to 589; sequence EQRKESGIDAK.

The protein belongs to the class-II aminoacyl-tRNA synthetase family. Type 1 subfamily. As to quaternary structure, homodimer.

The protein localises to the cytoplasm. The enzyme catalyses tRNA(Asx) + L-aspartate + ATP = L-aspartyl-tRNA(Asx) + AMP + diphosphate. Functionally, aspartyl-tRNA synthetase with relaxed tRNA specificity since it is able to aspartylate not only its cognate tRNA(Asp) but also tRNA(Asn). Reaction proceeds in two steps: L-aspartate is first activated by ATP to form Asp-AMP and then transferred to the acceptor end of tRNA(Asp/Asn). The polypeptide is Aspartate--tRNA(Asp/Asn) ligase (Corynebacterium kroppenstedtii (strain DSM 44385 / JCM 11950 / CIP 105744 / CCUG 35717)).